A 171-amino-acid polypeptide reads, in one-letter code: Crossover junction endodeoxyribonuclease RuvC (171 aa).

Catalysis depends on residues aspartate 7, glutamate 67, and aspartate 139. The Mg(2+) site is built by aspartate 7, glutamate 67, and aspartate 139.

Belongs to the RuvC family. In terms of assembly, homodimer which binds Holliday junction (HJ) DNA. The HJ becomes 2-fold symmetrical on binding to RuvC with unstacked arms; it has a different conformation from HJ DNA in complex with RuvA. In the full resolvosome a probable DNA-RuvA(4)-RuvB(12)-RuvC(2) complex forms which resolves the HJ. Mg(2+) serves as cofactor.

The protein resides in the cytoplasm. The catalysed reaction is Endonucleolytic cleavage at a junction such as a reciprocal single-stranded crossover between two homologous DNA duplexes (Holliday junction).. Functionally, the RuvA-RuvB-RuvC complex processes Holliday junction (HJ) DNA during genetic recombination and DNA repair. Endonuclease that resolves HJ intermediates. Cleaves cruciform DNA by making single-stranded nicks across the HJ at symmetrical positions within the homologous arms, yielding a 5'-phosphate and a 3'-hydroxyl group; requires a central core of homology in the junction. The consensus cleavage sequence is 5'-(A/T)TT(C/G)-3'. Cleavage occurs on the 3'-side of the TT dinucleotide at the point of strand exchange. HJ branch migration catalyzed by RuvA-RuvB allows RuvC to scan DNA until it finds its consensus sequence, where it cleaves and resolves the cruciform DNA. This chain is Crossover junction endodeoxyribonuclease RuvC, found in Geotalea uraniireducens (strain Rf4) (Geobacter uraniireducens).